The following is a 268-amino-acid chain: Tryptophan synthase alpha chain (268 aa).

Residues glutamate 49 and aspartate 60 each act as proton acceptor in the active site.

It belongs to the TrpA family. Tetramer of two alpha and two beta chains.

It catalyses the reaction (1S,2R)-1-C-(indol-3-yl)glycerol 3-phosphate + L-serine = D-glyceraldehyde 3-phosphate + L-tryptophan + H2O. It functions in the pathway amino-acid biosynthesis; L-tryptophan biosynthesis; L-tryptophan from chorismate: step 5/5. In terms of biological role, the alpha subunit is responsible for the aldol cleavage of indoleglycerol phosphate to indole and glyceraldehyde 3-phosphate. The sequence is that of Tryptophan synthase alpha chain from Escherichia coli (strain ATCC 8739 / DSM 1576 / NBRC 3972 / NCIMB 8545 / WDCM 00012 / Crooks).